Consider the following 551-residue polypeptide: Formate--tetrahydrofolate ligase (551 aa).

65–72 (TPAGEGKT) is an ATP binding site.

It belongs to the formate--tetrahydrofolate ligase family.

It catalyses the reaction (6S)-5,6,7,8-tetrahydrofolate + formate + ATP = (6R)-10-formyltetrahydrofolate + ADP + phosphate. Its pathway is one-carbon metabolism; tetrahydrofolate interconversion. In Thermosipho africanus (strain TCF52B), this protein is Formate--tetrahydrofolate ligase.